An 828-amino-acid chain; its full sequence is Sarcolemmal membrane-associated protein (828 aa).

The segment at 1–163 (MPSALAIFTC…AANTPSMYSQ (163 aa)) is necessary for targeting to centrosomes. Over 1–802 (MPSALAIFTC…REKGNNKPWP (802 aa)) the chain is Cytoplasmic. An FHA domain is found at 28–85 (IKIGRSVARCRPAQNNATFDCKVLSRNHALVWFDHKTGKFYLQDTKSSNGTFINSQRL). Phosphoserine is present on Ser148. Coiled-coil stretches lie at residues 167–202 (QLSQYLQEALHREQMLEQKLATLQRLLAITQEASDT) and 230–388 (NQTE…QEKT). The chain crosses the membrane as a helical; Anchor for type IV membrane protein span at residues 339–359 (KKELQHKIDEMEEKEQELQAK). Basic and acidic residues predominate over residues 433 to 446 (KLSKENQTRAKESD). The interval 433–467 (KLSKENQTRAKESDFSDTLSPSKEKSSDDTTDAQM) is disordered. 2 positions are modified to phosphoserine: Ser448 and Ser452. Positions 477–799 (AKVSLLKDDL…KLLREKGNNK (323 aa)) form a coiled coil. The chain crosses the membrane as a helical; Anchor for type IV membrane protein span at residues 803–823 (WMPMLAALVAVTAIVLYVPGL). The Extracellular segment spans residues 824–828 (ARASP).

The protein belongs to the SLMAP family. Homodimer. Interacts with myosin. Interacts with SIKE1 and both associate with the STRIPAK core complex composed of PP2A catalytic and scaffolding subunits, the striatins (PP2A regulatory subunits), the striatin-associated proteins MOB4, STRIP1 and STRIP2, PDCD10 and members of the STE20 kinases, such as STK24 and STK26. Interacts (via FHA domain) with STK3 (when phosphorylated); the interaction associates STK3 with the STRIPAK complex.

The protein resides in the cell membrane. Its subcellular location is the sarcolemma. The protein localises to the cytoplasm. It is found in the myofibril. It localises to the sarcomere. The protein resides in the m line. Its subcellular location is the z line. The protein localises to the cytoskeleton. It is found in the microtubule organizing center. It localises to the centrosome. The protein resides in the endoplasmic reticulum membrane. Its subcellular location is the mitochondrion membrane. In terms of biological role, associates with the striatin-interacting phosphatase and kinase (STRIPAK) core complex, forming the extended (SIKE1:SLMAP)STRIPAK complex. The (SIKE1:SLMAP)STRIPAK complex dephosphorylates STK3 leading to the inhibition of Hippo signaling and the control of cell growth. May play a role during myoblast fusion. In Homo sapiens (Human), this protein is Sarcolemmal membrane-associated protein.